The sequence spans 263 residues: MSKRNAVTTFFTNRVTKALGMTLALMMTCQSAMASLAADQTRYIFRGDKDALTITVTNNDKERTFGGQAWVDNIVEKDTRPTFVVTPSFFKVKPNGQQTLRIIMASDHLPKDKESVYWLNLQDIPPALEGSGIAVAVRTKLKLFYRPKALIEGRKGAEEGISLQSRPDGRTMLVNTTPYIFAIGSLLDGNGKRIATDNETAQKLLMFMPGDEVQVKGNVVKVDSLNDYGELQTWTINQKKTPTSSGQKASDSLVNPSDKADKK.

The first 34 residues, 1-34 (MSKRNAVTTFFTNRVTKALGMTLALMMTCQSAMA), serve as a signal peptide directing secretion. Residues 238-255 (QKKTPTSSGQKASDSLVN) show a composition bias toward polar residues. Positions 238-263 (QKKTPTSSGQKASDSLVNPSDKADKK) are disordered.

It belongs to the periplasmic pilus chaperone family.

It localises to the periplasm. Involved in the biogenesis of the CS31A capsule-like antigen. The protein is Chaperone protein ClpE (clpE) of Escherichia coli.